The sequence spans 287 residues: Bifunctional protein FolD (287 aa).

NADP(+) contacts are provided by residues 160 to 162 (GRS), serine 189, and threonine 230.

The protein belongs to the tetrahydrofolate dehydrogenase/cyclohydrolase family. In terms of assembly, homodimer.

It carries out the reaction (6R)-5,10-methylene-5,6,7,8-tetrahydrofolate + NADP(+) = (6R)-5,10-methenyltetrahydrofolate + NADPH. The catalysed reaction is (6R)-5,10-methenyltetrahydrofolate + H2O = (6R)-10-formyltetrahydrofolate + H(+). It participates in one-carbon metabolism; tetrahydrofolate interconversion. Catalyzes the oxidation of 5,10-methylenetetrahydrofolate to 5,10-methenyltetrahydrofolate and then the hydrolysis of 5,10-methenyltetrahydrofolate to 10-formyltetrahydrofolate. This chain is Bifunctional protein FolD, found in Chlamydia caviae (strain ATCC VR-813 / DSM 19441 / 03DC25 / GPIC) (Chlamydophila caviae).